Consider the following 364-residue polypeptide: tRNA(Met) cytidine acetate ligase (364 aa).

Residues 7-20 (IAEFNPFHNGHKYL), Gly-96, Asn-152, and Arg-175 contribute to the ATP site.

Belongs to the TmcAL family.

It localises to the cytoplasm. The catalysed reaction is cytidine(34) in elongator tRNA(Met) + acetate + ATP = N(4)-acetylcytidine(34) in elongator tRNA(Met) + AMP + diphosphate. Catalyzes the formation of N(4)-acetylcytidine (ac(4)C) at the wobble position of elongator tRNA(Met), using acetate and ATP as substrates. First activates an acetate ion to form acetyladenylate (Ac-AMP) and then transfers the acetyl group to tRNA to form ac(4)C34. The polypeptide is tRNA(Met) cytidine acetate ligase (Streptococcus sanguinis (strain SK36)).